The chain runs to 409 residues: All trans-polyprenyl-diphosphate synthase PDSS1 (409 aa).

Residues Lys-128, Arg-131, and His-167 each coordinate isopentenyl diphosphate. Positions 174 and 178 each coordinate Mg(2+). Arg-184 provides a ligand contact to isopentenyl diphosphate.

It belongs to the FPP/GGPP synthase family. Heterotetramer composed of 2 PDSS1/DPS1 and 2 PDSS2/DLP1 subunits. The cofactor is Mg(2+).

It is found in the mitochondrion. The catalysed reaction is 7 isopentenyl diphosphate + (2E,6E)-farnesyl diphosphate = all-trans-decaprenyl diphosphate + 7 diphosphate. It carries out the reaction 6 isopentenyl diphosphate + (2E,6E)-farnesyl diphosphate = all-trans-nonaprenyl diphosphate + 6 diphosphate. It functions in the pathway cofactor biosynthesis; ubiquinone biosynthesis. In terms of biological role, heterotetrameric enzyme that catalyzes the condensation of farnesyl diphosphate (FPP), which acts as a primer, and isopentenyl diphosphate (IPP) to produce prenyl diphosphates of varying chain lengths and participates in the determination of the side chain of ubiquinone. Supplies nona and decaprenyl diphosphate, the precursors for the side chain of the isoprenoid quinones ubiquinone-9 (Q9)and ubiquinone-10 (Q10) respectively. The enzyme adds isopentenyl diphosphate molecules sequentially to farnesyl diphosphate with trans stereochemistry. The sequence is that of All trans-polyprenyl-diphosphate synthase PDSS1 from Mus musculus (Mouse).